A 353-amino-acid polypeptide reads, in one-letter code: Photosystem II D2 protein (353 aa).

At T2 the chain carries N-acetylthreonine. T2 carries the phosphothreonine modification. A helical transmembrane segment spans residues 41–61 (CAYFAIGGWFTGTTFVTSWYT). H118 is a chlorophyll a binding site. Residues 125-141 (GFMLRQFELARSVQLRP) traverse the membrane as a helical segment. Pheophytin a is bound by residues Q130 and N143. A helical membrane pass occupies residues 153–166 (VFVSVFLIYPLGQS). H198 serves as a coordination point for chlorophyll a. The helical transmembrane segment at 208–228 (AALLCAIHGATVENTLFEDGD) threads the bilayer. Positions 215 and 262 each coordinate a plastoquinone. H215 serves as a coordination point for Fe cation. Fe cation is bound at residue H269. Residues 279 to 295 (GLWMSALGVVGLALNLR) traverse the membrane as a helical segment.

The protein belongs to the reaction center PufL/M/PsbA/D family. As to quaternary structure, PSII is composed of 1 copy each of membrane proteins PsbA, PsbB, PsbC, PsbD, PsbE, PsbF, PsbH, PsbI, PsbJ, PsbK, PsbL, PsbM, PsbT, PsbX, PsbY, PsbZ, Psb30/Ycf12, at least 3 peripheral proteins of the oxygen-evolving complex and a large number of cofactors. It forms dimeric complexes. Requires The D1/D2 heterodimer binds P680, chlorophylls that are the primary electron donor of PSII, and subsequent electron acceptors. It shares a non-heme iron and each subunit binds pheophytin, quinone, additional chlorophylls, carotenoids and lipids. There is also a Cl(-1) ion associated with D1 and D2, which is required for oxygen evolution. The PSII complex binds additional chlorophylls, carotenoids and specific lipids. as cofactor.

The protein resides in the plastid. It is found in the chloroplast thylakoid membrane. It catalyses the reaction 2 a plastoquinone + 4 hnu + 2 H2O = 2 a plastoquinol + O2. Functionally, photosystem II (PSII) is a light-driven water:plastoquinone oxidoreductase that uses light energy to abstract electrons from H(2)O, generating O(2) and a proton gradient subsequently used for ATP formation. It consists of a core antenna complex that captures photons, and an electron transfer chain that converts photonic excitation into a charge separation. The D1/D2 (PsbA/PsbD) reaction center heterodimer binds P680, the primary electron donor of PSII as well as several subsequent electron acceptors. D2 is needed for assembly of a stable PSII complex. This chain is Photosystem II D2 protein, found in Carica papaya (Papaya).